Consider the following 247-residue polypeptide: tRNA1(Val) (adenine(37)-N6)-methyltransferase (247 aa).

The protein belongs to the methyltransferase superfamily. tRNA (adenine-N(6)-)-methyltransferase family.

The protein resides in the cytoplasm. The enzyme catalyses adenosine(37) in tRNA1(Val) + S-adenosyl-L-methionine = N(6)-methyladenosine(37) in tRNA1(Val) + S-adenosyl-L-homocysteine + H(+). In terms of biological role, specifically methylates the adenine in position 37 of tRNA(1)(Val) (anticodon cmo5UAC). This is tRNA1(Val) (adenine(37)-N6)-methyltransferase from Edwardsiella ictaluri (strain 93-146).